Reading from the N-terminus, the 593-residue chain is Genetic interactor of prohibitins 3, mitochondrial (593 aa).

The N-terminal 61 residues, 1 to 61 (MLGRIRPFVR…NPSKPGFYRP (61 aa)), are a transit peptide targeting the mitochondrion. Residues 142–349 (VESIDKIMST…IVDVPGFSAN (208 aa)) form the CP-type G domain.

This sequence belongs to the TRAFAC class YlqF/YawG GTPase family. GEP3 subfamily.

Its subcellular location is the mitochondrion. May be involved in the mitochondrial lipid metabolism. This Debaryomyces hansenii (strain ATCC 36239 / CBS 767 / BCRC 21394 / JCM 1990 / NBRC 0083 / IGC 2968) (Yeast) protein is Genetic interactor of prohibitins 3, mitochondrial (GEP3).